Reading from the N-terminus, the 328-residue chain is Ribosomal RNA large subunit methyltransferase F (328 aa).

The tract at residues 1–31 (MTDTRKPPRKKPQRPAKPAAPREKATLHPRN) is disordered.

Belongs to the methyltransferase superfamily. METTL16/RlmF family.

The protein resides in the cytoplasm. It catalyses the reaction adenosine(1618) in 23S rRNA + S-adenosyl-L-methionine = N(6)-methyladenosine(1618) in 23S rRNA + S-adenosyl-L-homocysteine + H(+). In terms of biological role, specifically methylates the adenine in position 1618 of 23S rRNA. In Pseudomonas savastanoi pv. phaseolicola (strain 1448A / Race 6) (Pseudomonas syringae pv. phaseolicola (strain 1448A / Race 6)), this protein is Ribosomal RNA large subunit methyltransferase F.